Reading from the N-terminus, the 500-residue chain is Glycerol kinase (500 aa).

Thr-13 contacts ADP. ATP is bound by residues Thr-13, Thr-14, and Ser-15. A sn-glycerol 3-phosphate-binding site is contributed by Thr-13. Arg-17 contributes to the ADP binding site. Residues Arg-83, Glu-84, Tyr-136, and Asp-246 each coordinate sn-glycerol 3-phosphate. The glycerol site is built by Arg-83, Glu-84, Tyr-136, Asp-246, and Gln-247. Residues Thr-268 and Gly-311 each coordinate ADP. Residues Thr-268, Gly-311, Gln-315, and Gly-412 each coordinate ATP. Residues Gly-412 and Asn-416 each coordinate ADP.

This sequence belongs to the FGGY kinase family.

The catalysed reaction is glycerol + ATP = sn-glycerol 3-phosphate + ADP + H(+). It participates in polyol metabolism; glycerol degradation via glycerol kinase pathway; sn-glycerol 3-phosphate from glycerol: step 1/1. With respect to regulation, inhibited by fructose 1,6-bisphosphate (FBP). Key enzyme in the regulation of glycerol uptake and metabolism. Catalyzes the phosphorylation of glycerol to yield sn-glycerol 3-phosphate. The sequence is that of Glycerol kinase from Francisella tularensis subsp. novicida (strain U112).